A 531-amino-acid chain; its full sequence is uncharacterized protein (531 aa).

The N-terminal stretch at methionine 1 to alanine 22 is a signal peptide. Cysteine 23 is lipidated: N-palmitoyl cysteine. A lipid anchor (S-diacylglycerol cysteine) is attached at cysteine 23. The disordered stretch occupies residues glutamate 31–proline 51. Residues proline 40–proline 51 show a composition bias toward low complexity.

It belongs to the MG067/MG068/MG395 family.

It localises to the cell membrane. This is an uncharacterized protein from Mycoplasma pneumoniae (strain ATCC 29342 / M129 / Subtype 1) (Mycoplasmoides pneumoniae).